The chain runs to 432 residues: Adenylosuccinate synthetase (432 aa).

Residues Gly-13 to Lys-19 and Gly-41 to Thr-43 each bind GTP. Catalysis depends on Asp-14, which acts as the Proton acceptor. Asp-14 and Gly-41 together coordinate Mg(2+). Residues Asp-14–Lys-17, Asn-39–His-42, Thr-130, Arg-144, Gln-225, Thr-240, and Arg-304 contribute to the IMP site. His-42 (proton donor) is an active-site residue. Ala-300–Arg-306 is a binding site for substrate. GTP-binding positions include Arg-306, Lys-332–Asp-334, and Ser-415–Gly-417.

The protein belongs to the adenylosuccinate synthetase family. As to quaternary structure, homodimer. Mg(2+) is required as a cofactor.

The protein localises to the cytoplasm. It carries out the reaction IMP + L-aspartate + GTP = N(6)-(1,2-dicarboxyethyl)-AMP + GDP + phosphate + 2 H(+). Its pathway is purine metabolism; AMP biosynthesis via de novo pathway; AMP from IMP: step 1/2. Its function is as follows. Plays an important role in the de novo pathway of purine nucleotide biosynthesis. Catalyzes the first committed step in the biosynthesis of AMP from IMP. The sequence is that of Adenylosuccinate synthetase from Histophilus somni (strain 129Pt) (Haemophilus somnus).